Consider the following 291-residue polypeptide: Gamma-sarcoglycan (291 aa).

The Cytoplasmic portion of the chain corresponds to 1–37 (MVREQYTTVTEGTHIERPENQHIYKIGIYGWRKRCLY). The chain crosses the membrane as a helical; Signal-anchor for type II membrane protein span at residues 38–58 (LFVLLLLAILVVNLALTIWIL). Residues 59-291 (KVMWFSPIGM…TCEEHSHVCL (233 aa)) are Extracellular-facing. An N-linked (GlcNAc...) asparagine glycan is attached at N110. 2 disulfides stabilise this stretch: C265-C290 and C267-C283.

The protein belongs to the sarcoglycan beta/delta/gamma/zeta family. In terms of assembly, interacts with the syntrophin SNTA1 and FLNC. Cross-link to form 2 major subcomplexes: one consisting of SGCB, SGCD and SGCG and the other consisting of SGCB and SGCD. The association between SGCB and SGCG is particularly strong while SGCA is loosely associated with the other sarcoglycans. As to expression, most strongly expressed in skeletal and heart muscle. Also detected in proliferating myoblasts.

The protein resides in the cell membrane. It is found in the sarcolemma. The protein localises to the cytoplasm. Its subcellular location is the cytoskeleton. In terms of biological role, component of the sarcoglycan complex, a subcomplex of the dystrophin-glycoprotein complex which forms a link between the F-actin cytoskeleton and the extracellular matrix. In Mus musculus (Mouse), this protein is Gamma-sarcoglycan (Sgcg).